Consider the following 161-residue polypeptide: 18.1 kDa class I heat shock protein (161 aa).

The sHSP domain occupies 47–161 (ETAAFAGARI…PDVKSIQVTG (115 aa)).

Belongs to the small heat shock protein (HSP20) family. As to quaternary structure, may form oligomeric structures.

It localises to the cytoplasm. This is 18.1 kDa class I heat shock protein (HSP18.1) from Oryza sativa subsp. japonica (Rice).